The following is a 729-amino-acid chain: MAPPAKRARGLTLPGYKYLGPGNSLDQGEPTNPSDAAAKEHDEAYDKYIKSGKNPYFYFSAADEKFIKETEHAKDYGGKIGHYFFRAKRAFRPKLSETDSPTTSQQPEVRRSPRKHPGSKPPGKRPAPRHIFINLAKKKAKGTSNTNSNSMSENVEQHNPINAGTELSATGNESGGGGGGGGGRGAGGVGVSTGSFNNQTEFQYLGEGLVRITAHASRLIHLNMPEHETYKRIHVLNSESGVAGQMVQDDAHTQMVTPWSLIDANAWGVWFNPADWQLISNNMTEINLVSFEQEIFNVVLKTITESATSPPTKIYNNDLTASLMVALDTNNTLPYTPAAPRSETLGFYPWLPTKPTQYRYYLSCTRNLNPPTYTGQSQQITDSIQTGLHSDIMFYTIENAVPIHLLRTGDEFSTGIYHFDTKPLKLTHSWQTNRSLGLPPKLLTEPTTEGDQHPGTLPAANTRKGYHQTMNNSYTEATAIRPAQVGYNTPYMNFEYSNGGPFLTPIVPTADTQYNDDEPNGAIRFTMGYQHGQLTTSSQELERYTFNPQSKCGRAPKQQFNQQAPLNLENTNNGTLLPSDPIGGKPNMHFMNTLNTYGPLTALNNTAPVFPNGQIWDKELDTDLKPRLHVTAPFVCKNNPPGQLFVKIAPNLTDDFNADSPQQPRIITYSNFWWKGTLTFTAKMRSSNMWNPIQQHTTTAENIGNYIPTNIGGIKMFPEYSQLIPRKLY.

Disordered stretches follow at residues M1 to A38, K94 to R129, and A163 to A186. The Nuclear localization signal motif lies at P4–T12. Positions Y18–D63 are phospholipase A2-like. Polar residues-rich tracts occupy residues S24–S34 and T98–P107. Basic residues predominate over residues S112–P128. Positions E173–A186 are enriched in gly residues. N330 lines the Mg(2+) pocket. The disordered stretch occupies residues G437–G465.

The protein belongs to the parvoviridae capsid protein family.

It is found in the virion. It localises to the host nucleus. Capsid protein self-assembles to form an icosahedral capsid with a T=1 symmetry, about 22 nm in diameter, and consisting of 60 copies of two size variants of the capsid proteins, VP1 and VP2, which differ by the presence of an N-terminal extension in the minor protein VP1. The capsid encapsulates the genomic ssDNA. Capsid proteins are responsible for the attachment to host cell receptors. This attachment induces virion internalization predominantly through clathrin-dependent endocytosis. Binding to the host receptors also induces capsid rearrangements leading to surface exposure of VP1 N-terminus, specifically its phospholipase A2-like region and putative nuclear localization signal(s). VP1 N-terminus might serve as a lipolytic enzyme to breach the endosomal membrane during entry into host cell and might contribute to virus transport to the nucleus. The polypeptide is Capsid protein VP1 (Sus scrofa (Pig)).